The following is a 283-amino-acid chain: 5'-nucleotidase SurE 2 (283 aa).

Aspartate 19, aspartate 20, serine 52, and asparagine 110 together coordinate a divalent metal cation.

It belongs to the SurE nucleotidase family. A divalent metal cation serves as cofactor.

The protein localises to the cytoplasm. The enzyme catalyses a ribonucleoside 5'-phosphate + H2O = a ribonucleoside + phosphate. Functionally, nucleotidase that shows phosphatase activity on nucleoside 5'-monophosphates. The chain is 5'-nucleotidase SurE 2 from Chlamydia caviae (strain ATCC VR-813 / DSM 19441 / 03DC25 / GPIC) (Chlamydophila caviae).